A 606-amino-acid polypeptide reads, in one-letter code: Elongation factor 4 (606 aa).

Residues 11–193 (DKIRNFSIVA…AIVTRLPPPK (183 aa)) form the tr-type G domain. GTP-binding positions include 23 to 28 (DHGKST) and 140 to 143 (NKVD).

This sequence belongs to the TRAFAC class translation factor GTPase superfamily. Classic translation factor GTPase family. LepA subfamily.

It localises to the cell inner membrane. The catalysed reaction is GTP + H2O = GDP + phosphate + H(+). Functionally, required for accurate and efficient protein synthesis under certain stress conditions. May act as a fidelity factor of the translation reaction, by catalyzing a one-codon backward translocation of tRNAs on improperly translocated ribosomes. Back-translocation proceeds from a post-translocation (POST) complex to a pre-translocation (PRE) complex, thus giving elongation factor G a second chance to translocate the tRNAs correctly. Binds to ribosomes in a GTP-dependent manner. This Caulobacter vibrioides (strain ATCC 19089 / CIP 103742 / CB 15) (Caulobacter crescentus) protein is Elongation factor 4.